Here is a 1018-residue protein sequence, read N- to C-terminus: Contactin-1 (1018 aa).

An N-terminal signal peptide occupies residues 1–20; it reads MKMWLLFSLLVIISFKTCLS. Ig-like C2-type domains follow at residues 41-131, 137-223, 241-326, 331-407, 413-500, and 504-601; these read PIFE…ATLS, PFPP…KSVF, PADI…ARIY, PEWV…AELK, PTFE…GTLV, and PTRI…LVVR. Cystine bridges form between C65–C114 and C158–C211. Residues N208 and N258 are each glycosylated (N-linked (GlcNAc...) asparagine). A disulfide bond links C263 and C310. A glycan (N-linked (GlcNAc...) asparagine) is linked at N338. Disulfide bonds link C352/C391 and C436/C484. N457, N473, N494, and N521 each carry an N-linked (GlcNAc...) asparagine glycan. The cysteines at positions 526 and 583 are disulfide-linked. A glycan (N-linked (GlcNAc...) asparagine) is linked at N591. 4 consecutive Fibronectin type-III domains span residues 606-704, 709-806, 811-906, and 907-1000; these read PPGG…TDGA, APSD…SAQD, APTA…APPS, and QPPR…ILSP. Disordered stretches follow at residues 698–718 and 891–910; these read KIKT…GGGG and PPSD…QPPR. The GPI-anchor amidated serine moiety is linked to residue S999. Positions 1000-1018 are cleaved as a propeptide — removed in mature form; that stretch reads PCLLGFLLPALGILVYLEF.

This sequence belongs to the immunoglobulin superfamily. Contactin family. In terms of assembly, monomer. Interacts with CNTNAP1 in cis form. Binds to the carbonic-anhydrase like domain of PTPRZ1. Interacts with NOTCH1 and TNR. Detected in a complex with NRCAM and PTPRB. Interacts with TASOR.

The protein resides in the cell membrane. In terms of biological role, contactins mediate cell surface interactions during nervous system development. Involved in the formation of paranodal axo-glial junctions in myelinated peripheral nerves and in the signaling between axons and myelinating glial cells via its association with CNTNAP1. Participates in oligodendrocytes generation by acting as a ligand of NOTCH1. Its association with NOTCH1 promotes NOTCH1 activation through the released notch intracellular domain (NICD) and subsequent translocation to the nucleus. Interaction with TNR induces a repulsion of neurons and an inhibition of neurite outgrowth. The sequence is that of Contactin-1 (CNTN1) from Bos taurus (Bovine).